The primary structure comprises 248 residues: Putative glutamine amidotransferase-like protein C13C5.04 (248 aa).

The region spanning 13–217 (PMVEITSAYG…VKVLRGTEVF (205 aa)) is the Glutamine amidotransferase type-1 domain.

This chain is Putative glutamine amidotransferase-like protein C13C5.04, found in Schizosaccharomyces pombe (strain 972 / ATCC 24843) (Fission yeast).